Consider the following 35-residue polypeptide: Cupiennin-1a (35 aa).

Glutamic acid 1-amide is present on Glu-35.

This sequence belongs to the cationic peptide 04 (cupiennin) family. 01 subfamily. As to quaternary structure, monomer. Interacts with CSTX-1 (AC P81694), CSTX-9 (AC P58604), and CSTX-13 (AC P83919). In terms of tissue distribution, expressed by the venom gland.

The protein localises to the secreted. Functionally, has antimicrobial activity against B.subtilis, E.coli, E.faecalis, P.denitrificans, P.aeruginosa, P.putida, S.aureus, and S.epidermidis. Shows insecticidal and hemolytic activities. Probably acts by disturbing membrane function with its amphipathic structure. Synergistically increases the insecticidal activity of CSTX-1 (AC P81694), CSTX-9 (AC P58604), and CSTX-13 (AC P83919) by up to 65%. Also inhibits the formation of nitric oxide by neuronal nitric oxide synthase. The polypeptide is Cupiennin-1a (Cupiennius salei (American wandering spider)).